The chain runs to 96 residues: Putative membrane protein insertion efficiency factor (96 aa).

A disordered region spans residues 68-96; the sequence is DPVPEHFPARHPRPQGSPPTDHPPTDQPS. The span at 82–96 shows a compositional bias: pro residues; sequence QGSPPTDHPPTDQPS.

This sequence belongs to the UPF0161 family.

The protein resides in the cell membrane. Its function is as follows. Could be involved in insertion of integral membrane proteins into the membrane. In Deinococcus radiodurans (strain ATCC 13939 / DSM 20539 / JCM 16871 / CCUG 27074 / LMG 4051 / NBRC 15346 / NCIMB 9279 / VKM B-1422 / R1), this protein is Putative membrane protein insertion efficiency factor.